The primary structure comprises 660 residues: Acetyl-coenzyme A synthetase (660 aa).

CoA is bound by residues 197–200 (RGGK) and T317. ATP-binding positions include 397-399 (GEP), 421-426 (DTFWQT), D512, and R528. S536 contributes to the CoA binding site. Position 539 (R539) interacts with ATP. Mg(2+) contacts are provided by V550 and V555. K625 bears the N6-acetyllysine mark.

Belongs to the ATP-dependent AMP-binding enzyme family. The cofactor is Mg(2+). In terms of processing, acetylated. Deacetylation by the SIR2-homolog deacetylase activates the enzyme.

It catalyses the reaction acetate + ATP + CoA = acetyl-CoA + AMP + diphosphate. Catalyzes the conversion of acetate into acetyl-CoA (AcCoA), an essential intermediate at the junction of anabolic and catabolic pathways. AcsA undergoes a two-step reaction. In the first half reaction, AcsA combines acetate with ATP to form acetyl-adenylate (AcAMP) intermediate. In the second half reaction, it can then transfer the acetyl group from AcAMP to the sulfhydryl group of CoA, forming the product AcCoA. The protein is Acetyl-coenzyme A synthetase of Cupriavidus metallidurans (strain ATCC 43123 / DSM 2839 / NBRC 102507 / CH34) (Ralstonia metallidurans).